The sequence spans 121 residues: NADH-quinone oxidoreductase subunit A 2 (121 aa).

Transmembrane regions (helical) follow at residues 6–26 (FLPVLFMVTGIVLVAAATLFV), 60–80 (VPFFILAILLVVFDVEAMFLF), and 89–109 (IGFVGYIEMFVFMLLLLVGFA).

The protein belongs to the complex I subunit 3 family. NDH-1 is composed of 14 different subunits. Subunits NuoA, H, J, K, L, M, N constitute the membrane sector of the complex.

The protein localises to the cell inner membrane. The catalysed reaction is a quinone + NADH + 5 H(+)(in) = a quinol + NAD(+) + 4 H(+)(out). NDH-1 shuttles electrons from NADH, via FMN and iron-sulfur (Fe-S) centers, to quinones in the respiratory chain. The immediate electron acceptor for the enzyme in this species is believed to be ubiquinone. Couples the redox reaction to proton translocation (for every two electrons transferred, four hydrogen ions are translocated across the cytoplasmic membrane), and thus conserves the redox energy in a proton gradient. The polypeptide is NADH-quinone oxidoreductase subunit A 2 (Rhizobium meliloti (strain 1021) (Ensifer meliloti)).